Reading from the N-terminus, the 91-residue chain is Small ribosomal subunit protein bS16 (91 aa).

This sequence belongs to the bacterial ribosomal protein bS16 family.

This Lacticaseibacillus casei (strain BL23) (Lactobacillus casei) protein is Small ribosomal subunit protein bS16.